The primary structure comprises 261 residues: Guanine nucleotide exchange factor BopE (261 aa).

It belongs to the GEF (guanine exchange factor) SopE family. In terms of assembly, monomer. Interacts with human CDC42.

It is found in the secreted. In terms of biological role, activator for both CDC42 and RAC1 by directly interacting with these Rho GTPases and acting as a guanine nucleotide exchange factor (GEF). This activation results in actin cytoskeleton rearrangements and stimulates membrane ruffling, thus promoting bacterial entry into non-phagocytic cells. The polypeptide is Guanine nucleotide exchange factor BopE (bopE) (Burkholderia pseudomallei (strain 1710b)).